A 52-amino-acid chain; its full sequence is DNA-directed RNA polymerase subunit Rpo12 (52 aa).

Residues Cys13, Cys30, and Cys33 each coordinate Zn(2+).

The protein belongs to the archaeal Rpo12/eukaryotic RPC10 RNA polymerase subunit family. Part of the RNA polymerase complex. Requires Zn(2+) as cofactor.

It localises to the cytoplasm. It carries out the reaction RNA(n) + a ribonucleoside 5'-triphosphate = RNA(n+1) + diphosphate. Functionally, DNA-dependent RNA polymerase (RNAP) catalyzes the transcription of DNA into RNA using the four ribonucleoside triphosphates as substrates. The chain is DNA-directed RNA polymerase subunit Rpo12 from Pyrobaculum arsenaticum (strain DSM 13514 / JCM 11321 / PZ6).